We begin with the raw amino-acid sequence, 145 residues long: Large ribosomal subunit protein bL19 (145 aa).

The span at 114–136 shows a compositional bias: basic and acidic residues; that stretch reads IAEKMESPAAKATREAAKKEAKA. Residues 114 to 145 are disordered; sequence IAEKMESPAAKATREAAKKEAKAAKKNAAPAE.

This sequence belongs to the bacterial ribosomal protein bL19 family.

Its function is as follows. This protein is located at the 30S-50S ribosomal subunit interface and may play a role in the structure and function of the aminoacyl-tRNA binding site. This chain is Large ribosomal subunit protein bL19, found in Methylocella silvestris (strain DSM 15510 / CIP 108128 / LMG 27833 / NCIMB 13906 / BL2).